The chain runs to 208 residues: Glutathione S-transferase P (208 aa).

Residues 1 to 78 form the GST N-terminal domain; sequence MTLKLTYFDI…HLARLNGLNG (78 aa). Glutathione contacts are provided by residues Tyr7, Trp38, Lys42, 49 to 50, and 62 to 63; these read QV and QS. Positions 80–202 constitute a GST C-terminal domain; the sequence is NETETTFIDM…NKRAAINPPV (123 aa).

It belongs to the GST superfamily. Pi family. Homodimer. Expressed in dopaminergic (DA) neuron (at protein levels).

It catalyses the reaction RX + glutathione = an S-substituted glutathione + a halide anion + H(+). Conjugation of reduced glutathione to a wide number of exogenous and endogenous hydrophobic electrophiles. Prevents dopaminergic CEP neuron degeneration in response to Mn(2+). The sequence is that of Glutathione S-transferase P (gst-1) from Caenorhabditis elegans.